The sequence spans 376 residues: WD repeat-containing protein wdr-5.1 (376 aa).

A compositionally biased stretch (polar residues) spans 1–24; that stretch reads MDTSENAASAAEQQPTQQIDQLTV. Residues 1 to 70 form a disordered region; that stretch reads MDTSENAASA…TPNPNAAGAS (70 aa). Residues 25–53 show a composition bias toward low complexity; the sequence is PNAPDGGSSAPAPSTSPNSISPSNPTGTP. WD repeat units lie at residues 85 to 115, 127 to 157, 169 to 199, 211 to 241, 254 to 284, 296 to 329, and 341 to 373; these read GHTK…KIWN, GHKL…KIFE, GHNN…RIWD, AHSD…RIWD, DENP…KLWD, GHEN…YIWN, and GHTQ…HIWR.

The protein belongs to the WD repeat WDR5/wds family. Component of the SET2 complex (also known as the SET1/COMPASS complex), which contains at least set-2, swd-2.1, cfp-1, rbbp-5, wdr-5.1, dpy-30 and ash-2. Within the complex, interacts with cfp-1, ash-2, dpy-30 and hda-1. Interacts with histone H3 both unmethylated and methylated at 'Lys-4'. Interacts with jmjd-3.1, ceh-6, sox-2, sem-4 and egl-27. Interacts with set-2. As to expression, enriched in the germline. Detected in all nuclei of the embryo. In larvae, expression is detected in the nuclei of seam cells, somatic gonad precursor cells Z1 and Z4, vulval precursor cells, distal tip cells, hypodermal cells, intestinal and muscle cells. Also detected in the neurons from the ventral nerve cord, head and tail region. Expressed in the head and tail region, intestinal cells, muscle cells, cells of the vulva, spermatheca and sheath cells in adults.

The protein resides in the nucleus. In terms of biological role, contributes to histone modification. May position the N-terminus of histone H3 for efficient trimethylation at 'Lys-4'. Required for di- and trimethylation, particularly for the trimethylation at 'Lys-4' of histone H3. Not required for demethylation of histone H3 'Lys-27'. H3 'Lys-4' methylation represents a specific tag for epigenetic transcriptional activation, germline establishment, maintenance and function. Implicated in the epigenetic inheritance of lifespan over several generations. Acts in the germline to limit the longevity of the soma, probably by regulating a lipid metabolism pathway that signals from the germline to the intestine, thereby preventing accumulation of mono-unsaturated fatty acids. Required for RNA interference with probable antagonistic role against hpl-2 function. Plays a role in vulval cell fate specification by acting in the synthetic multivulva pathway independent of set-2. Sex determining protein required in the germline to promote the spermatogenesis to oogenesis switch during the late larval stages of development. Acts with the sex determining factor tra-1, and redundantly with wdr-5.2, to regulate fog-3 expression, which in turn determines germ cell fate. Cooperates with jmjd-3.1, egl-27 and unc-3 to ensure robust transdifferentiation of the Y rectal cell to the PDA motor neuron during larval development. The protein is WD repeat-containing protein wdr-5.1 (wdr-5.1) of Caenorhabditis elegans.